Consider the following 87-residue polypeptide: Small ribosomal subunit protein bS16 (87 aa).

It belongs to the bacterial ribosomal protein bS16 family.

The polypeptide is Small ribosomal subunit protein bS16 (Aster yellows witches'-broom phytoplasma (strain AYWB)).